Here is a 298-residue protein sequence, read N- to C-terminus: Tyrosine recombinase XerC (298 aa).

Residues 1–85 form the Core-binding (CB) domain; sequence MKPIAAFQEY…SLRSFYRYLT (85 aa). One can recognise a Tyr recombinase domain in the interval 106 to 291; the sequence is HLPQFFYEAE…TMAHLKNEYM (186 aa). Active-site residues include arginine 146, lysine 170, histidine 243, arginine 246, and histidine 269. Tyrosine 278 acts as the O-(3'-phospho-DNA)-tyrosine intermediate in catalysis.

It belongs to the 'phage' integrase family. XerC subfamily. As to quaternary structure, forms a cyclic heterotetrameric complex composed of two molecules of XerC and two molecules of XerD.

It localises to the cytoplasm. In terms of biological role, site-specific tyrosine recombinase, which acts by catalyzing the cutting and rejoining of the recombining DNA molecules. The XerC-XerD complex is essential to convert dimers of the bacterial chromosome into monomers to permit their segregation at cell division. It also contributes to the segregational stability of plasmids. This is Tyrosine recombinase XerC from Lacticaseibacillus paracasei (strain ATCC 334 / BCRC 17002 / CCUG 31169 / CIP 107868 / KCTC 3260 / NRRL B-441) (Lactobacillus paracasei).